A 265-amino-acid polypeptide reads, in one-letter code: Probable aquaporin TIP3-2 (265 aa).

The next 2 helical transmembrane spans lie at 32–52 and 62–82; these read LSEF…VYGL and LGGL…AVAV. An NPA 1 motif is present at residues 92–94; that stretch reads NPA. Transmembrane regions (helical) follow at residues 110–130, 151–171, and 179–199; these read AALY…LLRL, ALLL…ATAV, and DIAP…GGPF. The NPA 2 signature appears at 205 to 207; sequence NPA. The chain crosses the membrane as a helical span at residues 223–243; the sequence is WVYWLGPLIGAGMAGALYEFV.

Belongs to the MIP/aquaporin (TC 1.A.8) family. TIP (TC 1.A.8.10) subfamily. Expressed in leaves and at lower levels in roots.

It localises to the vacuole membrane. Functionally, aquaporins facilitate the transport of water and small neutral solutes across cell membranes. May be involved in transport from the vacuolar compartment to the cytoplasm. This is Probable aquaporin TIP3-2 (TIP3-2) from Oryza sativa subsp. japonica (Rice).